The chain runs to 205 residues: Interleukin-6 (205 aa).

Positions 1–21 (RFTSAFSLGLLLVTATAFPTP) are cleaved as a signal peptide. A disulfide bond links C64 and C70. Phosphoserine is present on S73. A disulfide bridge connects residues C93 and C103. Residue N164 is glycosylated (N-linked (GlcNAc...) asparagine).

This sequence belongs to the IL-6 superfamily. Component of a hexamer of two molecules each of IL6, IL6R and IL6ST; first binds to IL6R to associate with the signaling subunit IL6ST. Interacts with IL6R (via the N-terminal ectodomain); this interaction may be affected by IL6R-binding with SORL1, hence decreasing IL6 cis signaling. Interacts with SORL1 (via the N-terminal ectodomain); this interaction leads to IL6 internalization and lysosomal degradation. May form a trimeric complex with the soluble SORL1 ectodomain and soluble IL6R receptor; this interaction might stabilize circulating IL6, hence promoting IL6 trans signaling.

The protein localises to the secreted. Functionally, cytokine with a wide variety of biological functions in immunity, tissue regeneration, and metabolism. Binds to IL6R, then the complex associates to the signaling subunit IL6ST/gp130 to trigger the intracellular IL6-signaling pathway. The interaction with the membrane-bound IL6R and IL6ST stimulates 'classic signaling', whereas the binding of IL6 and soluble IL6R to IL6ST stimulates 'trans-signaling'. Alternatively, 'cluster signaling' occurs when membrane-bound IL6:IL6R complexes on transmitter cells activate IL6ST receptors on neighboring receiver cells. IL6 is a potent inducer of the acute phase response. Rapid production of IL6 contributes to host defense during infection and tissue injury, but excessive IL6 synthesis is involved in disease pathology. In the innate immune response, is synthesized by myeloid cells, such as macrophages and dendritic cells, upon recognition of pathogens through toll-like receptors (TLRs) at the site of infection or tissue injury. In the adaptive immune response, is required for the differentiation of B cells into immunoglobulin-secreting cells. Plays a major role in the differentiation of CD4(+) T cell subsets. Essential factor for the development of T follicular helper (Tfh) cells that are required for the induction of germinal-center formation. Required to drive naive CD4(+) T cells to the Th17 lineage. Also required for proliferation of myeloma cells and the survival of plasmablast cells. In terms of biological role, acts as an essential factor in bone homeostasis and on vessels directly or indirectly by induction of VEGF, resulting in increased angiogenesis activity and vascular permeability. Induces, through 'trans-signaling' and synergistically with IL1B and TNF, the production of VEGF. Involved in metabolic controls, is discharged into the bloodstream after muscle contraction increasing lipolysis and improving insulin resistance. 'Trans-signaling' in central nervous system also regulates energy and glucose homeostasis. Mediates, through GLP-1, crosstalk between insulin-sensitive tissues, intestinal L cells and pancreatic islets to adapt to changes in insulin demand. Also acts as a myokine. Plays a protective role during liver injury, being required for maintenance of tissue regeneration. Also has a pivotal role in iron metabolism by regulating HAMP/hepcidin expression upon inflammation or bacterial infection. Through activation of IL6ST-YAP-NOTCH pathway, induces inflammation-induced epithelial regeneration. This Orcinus orca (Killer whale) protein is Interleukin-6 (IL6).